A 257-amino-acid polypeptide reads, in one-letter code: Ribonuclease HII (257 aa).

One can recognise an RNase H type-2 domain in the interval 72–257 (TYIAGIDEVG…FAPIKDMIQK (186 aa)). A divalent metal cation is bound by residues Asp78, Glu79, and Asp170.

It belongs to the RNase HII family. Mn(2+) is required as a cofactor. Requires Mg(2+) as cofactor.

The protein localises to the cytoplasm. The enzyme catalyses Endonucleolytic cleavage to 5'-phosphomonoester.. In terms of biological role, endonuclease that specifically degrades the RNA of RNA-DNA hybrids. This chain is Ribonuclease HII, found in Bacillus cereus (strain G9842).